Reading from the N-terminus, the 737-residue chain is Fibronectin type III domain-containing protein 7 (737 aa).

Positions Met1–Ser25 are cleaved as a signal peptide. Fibronectin type-III domains follow at residues Ala28–Ala115, Ala116–Ala203, Pro204–Cys288, Ala289–Cys373, Cys374–Cys459, Ser460–Cys544, Cys545–Gly633, and Pro631–Thr715. Asn230 carries N-linked (GlcNAc...) asparagine glycosylation. N-linked (GlcNAc...) asparagine glycosylation occurs at Asn433.

Its subcellular location is the secreted. In Mus musculus (Mouse), this protein is Fibronectin type III domain-containing protein 7 (Fndc7).